Reading from the N-terminus, the 272-residue chain is MLNADHLHVARDGRAILNDLSIRIAPGCVTALLGRNGAGKSTLLGVLAGDLPAGGLARGATVRGGVALNGEPLHAIDAPRLARLRAVLPQASRPAFAFSAREIVLLGRYPHARRAGALTHADGEIASQALALAGATALEARDVTTLSGGELARVQFARVLAQLWPPPGAAQPPRYLLLDEPTAALDLAHQHQLLDTVRRLSRDWNLGVLTIVHDPNLAARHADRIAMLADGAIVAQGAPADVLRPEPIARCYGFRVRLVDAGDGVAPVIVPA.

An ABC transporter domain is found at 2 to 255 (LNADHLHVAR…EPIARCYGFR (254 aa)). An ATP-binding site is contributed by 34–41 (GRNGAGKS).

This sequence belongs to the ABC transporter superfamily. Heme (hemin) importer (TC 3.A.1.14.5) family. In terms of assembly, the complex is composed of two ATP-binding proteins (HmuV), two transmembrane proteins (HmuU) and a solute-binding protein (HmuT).

It localises to the cell inner membrane. Part of the ABC transporter complex HmuTUV involved in hemin import. Responsible for energy coupling to the transport system. The chain is Hemin import ATP-binding protein HmuV from Burkholderia pseudomallei (strain 1710b).